The primary structure comprises 236 residues: MKTIVICSGGLDSVSLAHRIAAEHELLGLLSFDYGQRHRKELDFAAACAKRLGVPHQIIDIREIGRHLTGSALTDDVDVPDGHYAEETMKTTVVPNRNAIMLAIAFGVAATRKADAVAAAVHGGDHFIYPDCRPGFIDAFQVMQNHALEGYADVILYTPYVNVSKADIVADGAKHHTPFAETWSCYKGGTRHCGRCGTCVERREAFHLAGVTDPTEYEDPEFWVAATAAYVAEEVK.

7–17 (CSGGLDSVSLA) provides a ligand contact to ATP. Residues C185, C193, C196, and C199 each coordinate Zn(2+).

The protein belongs to the QueC family. Zn(2+) serves as cofactor.

The enzyme catalyses 7-carboxy-7-deazaguanine + NH4(+) + ATP = 7-cyano-7-deazaguanine + ADP + phosphate + H2O + H(+). Its pathway is purine metabolism; 7-cyano-7-deazaguanine biosynthesis. In terms of biological role, catalyzes the ATP-dependent conversion of 7-carboxy-7-deazaguanine (CDG) to 7-cyano-7-deazaguanine (preQ(0)). This Sinorhizobium fredii (strain NBRC 101917 / NGR234) protein is 7-cyano-7-deazaguanine synthase.